The primary structure comprises 510 residues: ATP synthase subunit alpha, chloroplastic (510 aa).

170–177 (GDRQTGKT) is an ATP binding site.

Belongs to the ATPase alpha/beta chains family. F-type ATPases have 2 components, CF(1) - the catalytic core - and CF(0) - the membrane proton channel. CF(1) has five subunits: alpha(3), beta(3), gamma(1), delta(1), epsilon(1). CF(0) has four main subunits: a, b, b' and c.

The protein resides in the plastid. It localises to the chloroplast thylakoid membrane. It catalyses the reaction ATP + H2O + 4 H(+)(in) = ADP + phosphate + 5 H(+)(out). Produces ATP from ADP in the presence of a proton gradient across the membrane. The alpha chain is a regulatory subunit. This Phaseolus vulgaris (Kidney bean) protein is ATP synthase subunit alpha, chloroplastic.